The following is a 226-amino-acid chain: MKDLFLFSSLLDASHTFSYFFHIGLVALIAVIVAMMATRSMQLVPRGMQNLGEAFLEGVLSMGRDTMGSEKGARKYLPLVATLGIIVFFSNIIGIIPGFHSPTASLNLTLSLAIIVFVYYHFEGIRAQGFVKYFAHFMGPIKLLAPLMFPIEIVSHLSRVVSLSFRLFGNIKGDDLFLMVILALVPYIAPLPAYVLLTFMAFLQAFIFMILTYVYLAGATVVEEGH.

The next 6 helical transmembrane spans lie at Phe17 to Ala37, Leu79 to Phe99, Ser105 to Ile125, Phe134 to Val154, Leu176 to Leu196, and Phe199 to Ala219.

It belongs to the ATPase A chain family. As to quaternary structure, F-type ATPases have 2 components, CF(1) - the catalytic core - and CF(0) - the membrane proton channel. CF(1) has five subunits: alpha(3), beta(3), gamma(1), delta(1), epsilon(1). CF(0) has three main subunits: a(1), b(2) and c(9-12). The alpha and beta chains form an alternating ring which encloses part of the gamma chain. CF(1) is attached to CF(0) by a central stalk formed by the gamma and epsilon chains, while a peripheral stalk is formed by the delta and b chains.

It localises to the cell inner membrane. Key component of the proton channel; it plays a direct role in the translocation of protons across the membrane. The polypeptide is ATP synthase subunit a (Campylobacter jejuni subsp. jejuni serotype O:23/36 (strain 81-176)).